Here is a 177-residue protein sequence, read N- to C-terminus: Interleukin-1 receptor antagonist protein (177 aa).

The N-terminal stretch at 1–25 is a signal peptide; that stretch reads MRPSRSTRRHLISLLLFLFHSETAC. Cys91 and Cys141 are disulfide-bonded. Residue Asn109 is glycosylated (N-linked (GlcNAc...) asparagine).

Belongs to the IL-1 family.

It localises to the secreted. Its function is as follows. Anti-inflammatory antagonist of interleukin-1 family of proinflammatory cytokines such as interleukin-1beta/IL1B and interleukin-1alpha/IL1A. Protects from immune dysregulation and uncontrolled systemic inflammation triggered by IL1 for a range of innate stimulatory agents such as pathogens. This Oryctolagus cuniculus (Rabbit) protein is Interleukin-1 receptor antagonist protein (IL1RN).